A 239-amino-acid polypeptide reads, in one-letter code: Ribonuclease PH (239 aa).

Phosphate is bound by residues arginine 86 and 124-126; that span reads GTR.

This sequence belongs to the RNase PH family. Homohexameric ring arranged as a trimer of dimers.

It carries out the reaction tRNA(n+1) + phosphate = tRNA(n) + a ribonucleoside 5'-diphosphate. Its function is as follows. Phosphorolytic 3'-5' exoribonuclease that plays an important role in tRNA 3'-end maturation. Removes nucleotide residues following the 3'-CCA terminus of tRNAs; can also add nucleotides to the ends of RNA molecules by using nucleoside diphosphates as substrates, but this may not be physiologically important. Probably plays a role in initiation of 16S rRNA degradation (leading to ribosome degradation) during starvation. This chain is Ribonuclease PH, found in Anaeromyxobacter dehalogenans (strain 2CP-1 / ATCC BAA-258).